The primary structure comprises 432 residues: GTPase HflX (432 aa).

Positions 202-367 (FTVALVGYTN…ELRRAVGRAM (166 aa)) constitute a Hflx-type G domain. Residues 208–215 (GYTNAGKS), 233–237 (FATLD), 255–258 (DTVG), 321–324 (NKID), and 345–347 (SAQ) each bind GTP. Mg(2+) contacts are provided by S215 and T235.

This sequence belongs to the TRAFAC class OBG-HflX-like GTPase superfamily. HflX GTPase family. Monomer. Associates with the 50S ribosomal subunit. The cofactor is Mg(2+).

Its subcellular location is the cytoplasm. GTPase that associates with the 50S ribosomal subunit and may have a role during protein synthesis or ribosome biogenesis. The chain is GTPase HflX from Magnetococcus marinus (strain ATCC BAA-1437 / JCM 17883 / MC-1).